The sequence spans 134 residues: Putative thioredoxin 2 (134 aa).

The Thioredoxin domain maps to 3 to 106 (STVELTKENF…LTDVIGQARK (104 aa)). The cysteines at positions 31 and 34 are disulfide-linked. The segment at 115 to 134 (AVAEQQAQAGQNGQEGQEGQ) is disordered. Over residues 117-134 (AEQQAQAGQNGQEGQEGQ) the composition is skewed to low complexity.

This sequence belongs to the thioredoxin family.

Its subcellular location is the cytoplasm. Its function is as follows. Component of the thioredoxin-thioredoxin reductase system. Participates in various redox reactions through the reversible oxidation of its active center dithiol to a disulfide and catalyzes dithiol-disulfide exchange reactions. The protein is Putative thioredoxin 2 (trxC) of Streptomyces coelicolor (strain ATCC BAA-471 / A3(2) / M145).